We begin with the raw amino-acid sequence, 146 residues long: FAD synthase (146 aa).

ATP-binding positions include 9 to 10 (TF), 14 to 17 (HPGH), and D92.

It belongs to the archaeal FAD synthase family. Homodimer. Requires a divalent metal cation as cofactor.

It catalyses the reaction FMN + ATP + H(+) = FAD + diphosphate. It functions in the pathway cofactor biosynthesis; FAD biosynthesis; FAD from FMN: step 1/1. In terms of biological role, catalyzes the transfer of the AMP portion of ATP to flavin mononucleotide (FMN) to produce flavin adenine dinucleotide (FAD) coenzyme. In Halobacterium salinarum (strain ATCC 29341 / DSM 671 / R1), this protein is FAD synthase.